The primary structure comprises 507 residues: Beta-glucosidase 13 (507 aa).

Positions 1 to 22 are cleaved as a signal peptide; it reads MRTKYFSLLVFIIVLASNEVIA. Gln50 provides a ligand contact to a beta-D-glucoside. The N-linked (GlcNAc...) asparagine glycan is linked to Asn81. Residues His154 and 199–200 contribute to the a beta-D-glucoside site; that span reads NE. The active-site Proton donor is the Glu200. Cys219 and Cys227 form a disulfide bridge. An N-linked (GlcNAc...) asparagine glycan is attached at Asn226. Tyr344 contributes to the a beta-D-glucoside binding site. An N-linked (GlcNAc...) asparagine glycan is attached at Asn358. A beta-D-glucoside is bound by residues Glu414, Trp459, 466–467, and Phe475; that span reads EW. Glu414 functions as the Nucleophile in the catalytic mechanism.

The protein belongs to the glycosyl hydrolase 1 family.

It catalyses the reaction Hydrolysis of terminal, non-reducing beta-D-glucosyl residues with release of beta-D-glucose.. In Arabidopsis thaliana (Mouse-ear cress), this protein is Beta-glucosidase 13.